The sequence spans 183 residues: Bifunctional protein PyrR (183 aa).

A PRPP-binding motif is present at residues 102-114 (VVLVDDVLYTGRT).

The protein belongs to the purine/pyrimidine phosphoribosyltransferase family. PyrR subfamily. As to quaternary structure, homodimer and homohexamer; in equilibrium.

It catalyses the reaction UMP + diphosphate = 5-phospho-alpha-D-ribose 1-diphosphate + uracil. Its function is as follows. Regulates transcriptional attenuation of the pyrimidine nucleotide (pyr) operon by binding in a uridine-dependent manner to specific sites on pyr mRNA. This disrupts an antiterminator hairpin in the RNA and favors formation of a downstream transcription terminator, leading to a reduced expression of downstream genes. Also displays a weak uracil phosphoribosyltransferase activity which is not physiologically significant. The chain is Bifunctional protein PyrR from Listeria welshimeri serovar 6b (strain ATCC 35897 / DSM 20650 / CCUG 15529 / CIP 8149 / NCTC 11857 / SLCC 5334 / V8).